Reading from the N-terminus, the 419-residue chain is MHVSELQTLHISKLLELAEEHGIENANRFRKQDLVFAIVRQMMKKGEGFTCSGTLEILPDGFGFLRSADTSYLAGPDDIYVSPTQIRRFNLHTGDTIEGSVRVPKDNERYFALVRLDSINGDHPEVCRHKILFENLTPLFPTEQLKLERDLKSEENLTGRAIDLISPIGKGQRALLVAPPKIGKTVMLENIAHEVTANYPEVELIVLLIDERPEEVTEMSRSVRGEVVSSTFDEPAQRHVQVAEMVLEKAKRMVEHKKDVVILLDSITRLARAYNTVVPASGKILTGGVDANALHRPKRFFGAARNVEEGGSLTIIATALVETGSRMDDVIYEEFKGTGNMELHLDRRIAEKRLFPAININKSGTRREELLVPNDQLQRMWLLRKFLHPMDEIEATEFLNGKIKASKNNDDFFELMRGK.

Positions 48–123 (GFTCSGTLEI…VRLDSINGDH (76 aa)) constitute a Rho RNA-BD domain. Residues 169–174 (GKGQRA), 181–186 (KIGKTV), and Arg-212 contribute to the ATP site.

Belongs to the Rho family. In terms of assembly, homohexamer. The homohexamer assembles into an open ring structure.

Its function is as follows. Facilitates transcription termination by a mechanism that involves Rho binding to the nascent RNA, activation of Rho's RNA-dependent ATPase activity, and release of the mRNA from the DNA template. This Neisseria gonorrhoeae protein is Transcription termination factor Rho.